The following is a 207-amino-acid chain: Guanylate kinase (207 aa).

The 181-residue stretch at 4-184 (GTLYIVSAPS…ALADLHTIIR (181 aa)) folds into the Guanylate kinase-like domain. Position 11 to 18 (11 to 18 (APSGAGKS)) interacts with ATP.

It belongs to the guanylate kinase family.

The protein resides in the cytoplasm. It carries out the reaction GMP + ATP = GDP + ADP. Functionally, essential for recycling GMP and indirectly, cGMP. The protein is Guanylate kinase of Photorhabdus laumondii subsp. laumondii (strain DSM 15139 / CIP 105565 / TT01) (Photorhabdus luminescens subsp. laumondii).